Reading from the N-terminus, the 233-residue chain is Zinc import ATP-binding protein ZnuC (233 aa).

Residues 6–222 enclose the ABC transporter domain; the sequence is IEFRNVSKKF…SEFSNALSAL (217 aa). Residue 38–45 coordinates ATP; that stretch reads GPNGAGKT.

Belongs to the ABC transporter superfamily. Zinc importer (TC 3.A.1.15.5) family. The complex is composed of two ATP-binding proteins (ZnuC), two transmembrane proteins (ZnuB) and a solute-binding protein (ZnuA).

Its subcellular location is the cell inner membrane. It carries out the reaction Zn(2+)(out) + ATP(in) + H2O(in) = Zn(2+)(in) + ADP(in) + phosphate(in) + H(+)(in). Its function is as follows. Part of the ABC transporter complex ZnuABC involved in zinc import. Responsible for energy coupling to the transport system. This chain is Zinc import ATP-binding protein ZnuC, found in Rickettsia conorii (strain ATCC VR-613 / Malish 7).